The primary structure comprises 80 residues: Small ribosomal subunit protein uS17 (80 aa).

The protein belongs to the universal ribosomal protein uS17 family. In terms of assembly, part of the 30S ribosomal subunit.

In terms of biological role, one of the primary rRNA binding proteins, it binds specifically to the 5'-end of 16S ribosomal RNA. This is Small ribosomal subunit protein uS17 from Cereibacter sphaeroides (strain ATCC 17029 / ATH 2.4.9) (Rhodobacter sphaeroides).